Here is a 219-residue protein sequence, read N- to C-terminus: Probable GTP-binding protein EngB (219 aa).

An EngB-type G domain is found at 42–219 (SVPEIAFAGR…RTAVLEAVEL (178 aa)). GTP is bound by residues 50 to 57 (GRSNVGKS), 77 to 81 (GRTQE), 97 to 100 (DMPG), 164 to 167 (TKAD), and 198 to 200 (TSS). Ser-57 and Thr-79 together coordinate Mg(2+).

It belongs to the TRAFAC class TrmE-Era-EngA-EngB-Septin-like GTPase superfamily. EngB GTPase family. Mg(2+) is required as a cofactor.

Necessary for normal cell division and for the maintenance of normal septation. This chain is Probable GTP-binding protein EngB, found in Sphingopyxis alaskensis (strain DSM 13593 / LMG 18877 / RB2256) (Sphingomonas alaskensis).